The chain runs to 488 residues: H2.0-like homeobox protein (488 aa).

Disordered regions lie at residues A118–D173 and W331–L488. Low complexity-rich tracts occupy residues Q125 to Q135 and P158 to S171. The segment at residues R276 to K335 is a DNA-binding region (homeobox). Composition is skewed to basic and acidic residues over residues S334–E349 and D363–G372. A compositionally biased stretch (acidic residues) spans E373–S383. Residues D390–L401 are compositionally biased toward basic and acidic residues. Gly residues predominate over residues G422 to N432. A compositionally biased stretch (low complexity) spans S433–S454.

This sequence belongs to the H2.0 homeobox family. In terms of tissue distribution, low level in normal B and T-cells, high level in activated lymphocytes and monocytes. Also found in thymus, tonsil, bone marrow, developing vessels, and fetal brain.

Its subcellular location is the nucleus. Transcription factor required for TBX21/T-bet-dependent maturation of Th1 cells as well as maintenance of Th1-specific gene expression. Involved in embryogenesis and hematopoiesis. In Homo sapiens (Human), this protein is H2.0-like homeobox protein (HLX).